A 328-amino-acid polypeptide reads, in one-letter code: DNA-directed RNA polymerase subunit alpha (328 aa).

The tract at residues 1–231 (MIYQMQMPTK…DHITFFANFS (231 aa)) is alpha N-terminal domain (alpha-NTD). Residues 247-328 (DEFESMRKLL…MDITRYQLKG (82 aa)) are alpha C-terminal domain (alpha-CTD).

It belongs to the RNA polymerase alpha chain family. As to quaternary structure, homodimer. The RNAP catalytic core consists of 2 alpha, 1 beta, 1 beta' and 1 omega subunit. When a sigma factor is associated with the core the holoenzyme is formed, which can initiate transcription.

The catalysed reaction is RNA(n) + a ribonucleoside 5'-triphosphate = RNA(n+1) + diphosphate. In terms of biological role, DNA-dependent RNA polymerase catalyzes the transcription of DNA into RNA using the four ribonucleoside triphosphates as substrates. This Chlorobaculum tepidum (strain ATCC 49652 / DSM 12025 / NBRC 103806 / TLS) (Chlorobium tepidum) protein is DNA-directed RNA polymerase subunit alpha.